We begin with the raw amino-acid sequence, 352 residues long: 4-hydroxy-3-methylbut-2-enyl diphosphate reductase (352 aa).

[4Fe-4S] cluster is bound at residue cysteine 36. Residues histidine 76 and histidine 114 each coordinate (2E)-4-hydroxy-3-methylbut-2-enyl diphosphate. 2 residues coordinate dimethylallyl diphosphate: histidine 76 and histidine 114. Positions 76 and 114 each coordinate isopentenyl diphosphate. Cysteine 136 serves as a coordination point for [4Fe-4S] cluster. Residue histidine 164 participates in (2E)-4-hydroxy-3-methylbut-2-enyl diphosphate binding. Histidine 164 lines the dimethylallyl diphosphate pocket. Residue histidine 164 participates in isopentenyl diphosphate binding. Glutamate 166 acts as the Proton donor in catalysis. Threonine 204 provides a ligand contact to (2E)-4-hydroxy-3-methylbut-2-enyl diphosphate. Position 234 (cysteine 234) interacts with [4Fe-4S] cluster. (2E)-4-hydroxy-3-methylbut-2-enyl diphosphate-binding residues include serine 262, serine 263, asparagine 264, and serine 309. The dimethylallyl diphosphate site is built by serine 262, serine 263, asparagine 264, and serine 309. 4 residues coordinate isopentenyl diphosphate: serine 262, serine 263, asparagine 264, and serine 309.

It belongs to the IspH family. The cofactor is [4Fe-4S] cluster.

It carries out the reaction isopentenyl diphosphate + 2 oxidized [2Fe-2S]-[ferredoxin] + H2O = (2E)-4-hydroxy-3-methylbut-2-enyl diphosphate + 2 reduced [2Fe-2S]-[ferredoxin] + 2 H(+). The catalysed reaction is dimethylallyl diphosphate + 2 oxidized [2Fe-2S]-[ferredoxin] + H2O = (2E)-4-hydroxy-3-methylbut-2-enyl diphosphate + 2 reduced [2Fe-2S]-[ferredoxin] + 2 H(+). It functions in the pathway isoprenoid biosynthesis; dimethylallyl diphosphate biosynthesis; dimethylallyl diphosphate from (2E)-4-hydroxy-3-methylbutenyl diphosphate: step 1/1. The protein operates within isoprenoid biosynthesis; isopentenyl diphosphate biosynthesis via DXP pathway; isopentenyl diphosphate from 1-deoxy-D-xylulose 5-phosphate: step 6/6. Catalyzes the conversion of 1-hydroxy-2-methyl-2-(E)-butenyl 4-diphosphate (HMBPP) into a mixture of isopentenyl diphosphate (IPP) and dimethylallyl diphosphate (DMAPP). Acts in the terminal step of the DOXP/MEP pathway for isoprenoid precursor biosynthesis. The chain is 4-hydroxy-3-methylbut-2-enyl diphosphate reductase from Bifidobacterium longum (strain NCC 2705).